Reading from the N-terminus, the 758-residue chain is Vitamin K-dependent gamma-carboxylase (758 aa).

The tract at residues 1–22 is disordered; sequence MAVSAGSARTSPSSDKVQKDKA. A2 carries the N-acetylalanine modification. Topologically, residues 2–60 are cytoplasmic; it reads AVSAGSARTSPSSDKVQKDKAELISGPRQDSRIGKLLGFEWTDLSSWRRLVTLLNRPTD. The helical transmembrane segment at 61 to 81 threads the bilayer; it reads PASLAVFRFLFGFLMVLDIPQ. The Lumenal segment spans residues 82 to 113; sequence ERGLSSLDRKYLDGLDVCRFPLLDALRPLPLD. A disulfide bond links C99 and C450. Residues 114–134 traverse the membrane as a helical segment; it reads WMYLVYTIMFLGALGMMLGLC. The Cytoplasmic portion of the chain corresponds to 135–136; the sequence is YR. The chain crosses the membrane as a helical span at residues 137-157; the sequence is ISCVLFLLPYWYVFLLDKTSW. Residues 158-292 lie on the Lumenal side of the membrane; that stretch reads NNHSYLYGLL…VSYFHCMNSQ (135 aa). K218 acts as the Proton acceptor in catalysis. A helical membrane pass occupies residues 293–313; that stretch reads LFSIGMFSYVMLASSPLFCSP. The Cytoplasmic portion of the chain corresponds to 314–361; that stretch reads EWPRKLVSYCPRRLQQLLPLKAAPQPSVSCVYKRSRGKSGQKPGLRHQ. Residues 362 to 382 traverse the membrane as a helical segment; that stretch reads LGAAFTLLYLLEQLFLPYSHF. At 383–758 the chain is on the lumenal side; the sequence is LTQGYNNWTN…SNPDPVHSEF (376 aa). N-linked (GlcNAc...) asparagine glycosylation is found at N459 and N550. The segment at 732–758 is disordered; sequence GELNPSNTDSSHSNPPESNPDPVHSEF. Residues 735–747 show a composition bias toward polar residues; that stretch reads NPSNTDSSHSNPP.

This sequence belongs to the vitamin K-dependent gamma-carboxylase family. As to quaternary structure, monomer. May interact with CALU.

It is found in the endoplasmic reticulum membrane. The catalysed reaction is 4-carboxy-L-glutamyl-[protein] + 2,3-epoxyphylloquinone + H2O + H(+) = phylloquinol + L-glutamyl-[protein] + CO2 + O2. Mediates the vitamin K-dependent carboxylation of glutamate residues to calcium-binding gamma-carboxyglutamate (Gla) residues with the concomitant conversion of the reduced hydroquinone form of vitamin K to vitamin K epoxide. Catalyzes gamma-carboxylation of various proteins, such as blood coagulation factors (F2, F7, F9 and F10), osteocalcin (BGLAP) or matrix Gla protein (MGP). This chain is Vitamin K-dependent gamma-carboxylase (GGCX), found in Homo sapiens (Human).